A 92-amino-acid polypeptide reads, in one-letter code: Plasmid copy control protein CopR (92 aa).

Residues 1-27 show a composition bias toward basic and acidic residues; it reads MELAFRESLKKMRGTKSKEKFSQELEM. 2 disordered regions span residues 1-40 and 63-92; these read MELA…SGKS and IPNE…NDFV. The HTH cro/C1-type domain maps to 9 to 62; it reads LKKMRGTKSKEKFSQELEMSRSNYSRIESGKSDPTIKTLEQIVKLTNSTLVVDL. Positions 20–39 form a DNA-binding region, H-T-H motif; that stretch reads KFSQELEMSRSNYSRIESGK.

Involved in copy control of plasmid pIP501. The sequence is that of Plasmid copy control protein CopR (copR) from Streptococcus agalactiae.